A 402-amino-acid polypeptide reads, in one-letter code: Multidrug resistance protein MdtH (402 aa).

Residues M1–K12 are Cytoplasmic-facing. A helical membrane pass occupies residues Y13 to I33. Over S34–E98 the chain is Periplasmic. The helical transmembrane segment at P99 to F116 threads the bilayer. The Cytoplasmic portion of the chain corresponds to D117–S138. Residues L139–L159 traverse the membrane as a helical segment. Residues Q160 to R164 are Periplasmic-facing. A helical transmembrane segment spans residues L165–L185. Over P186–Y213 the chain is Cytoplasmic. Residues V214–M234 form a helical membrane-spanning segment. Over V235–A243 the chain is Periplasmic. Residues A244–A264 traverse the membrane as a helical segment. The Cytoplasmic portion of the chain corresponds to R265–R276. The helical transmembrane segment at L277–L297 threads the bilayer. At Q298–Q299 the chain is on the periplasmic side. A helical membrane pass occupies residues L300–T320. The Cytoplasmic portion of the chain corresponds to L321 to R339. The helical transmembrane segment at L340–G360 threads the bilayer. At K361–E367 the chain is on the periplasmic side. Residues L368–F388 traverse the membrane as a helical segment. Topologically, residues S389–A402 are cytoplasmic.

The protein belongs to the major facilitator superfamily. DHA1 family. MdtH (TC 2.A.1.2.21) subfamily.

Its subcellular location is the cell inner membrane. The polypeptide is Multidrug resistance protein MdtH (Salmonella paratyphi C (strain RKS4594)).